The sequence spans 790 residues: Histone-lysine N-methyltransferase, H3 lysine-9 specific SUVH6 (790 aa).

Residues 251–271 form a disordered region; it reads QLRILGVGTSSGSSSGDSSRN. Residues 256–268 are compositionally biased toward low complexity; that stretch reads GVGTSSGSSSGDS. The region spanning 330–482 is the YDG domain; that stretch reads GEVPGVEVGD…MNVFKFQLRR (153 aa). In terms of domain architecture, Pre-SET spans 551–613; it reads KSCCCTTRCT…SCYLRVTQHG (63 aa). Zn(2+)-binding residues include Cys-553, Cys-554, Cys-555, Cys-559, Cys-567, Cys-569, Cys-595, Cys-599, Cys-601, and Cys-605. In terms of domain architecture, SET spans 616 to 760; it reads LPLEIFKTKS…PLQELCYDYN (145 aa). Residues 626-628, Asp-662, Tyr-664, Arg-714, and 717-718 contribute to the S-adenosyl-L-methionine site; these read RGW and NH. Cys-720, Cys-778, Cys-780, and Cys-785 together coordinate Zn(2+). In terms of domain architecture, Post-SET spans 774 to 790; sequence KQKPCFCGAAVCRRRLY.

Belongs to the class V-like SAM-binding methyltransferase superfamily. Histone-lysine methyltransferase family. Suvar3-9 subfamily.

It localises to the nucleus. The protein resides in the chromosome. It is found in the centromere. It carries out the reaction N(6)-methyl-L-lysyl(9)-[histone H3] + S-adenosyl-L-methionine = N(6),N(6)-dimethyl-L-lysyl(9)-[histone H3] + S-adenosyl-L-homocysteine + H(+). The enzyme catalyses L-lysyl(9)-[histone H3] + S-adenosyl-L-methionine = N(6)-methyl-L-lysyl(9)-[histone H3] + S-adenosyl-L-homocysteine + H(+). Its function is as follows. Histone methyltransferase. Methylates 'Lys-9' of histone H3. H3 'Lys-9' methylation represents a specific tag for epigenetic transcriptional repression. Seems to act preferentially on dsMRNA. In Arabidopsis thaliana (Mouse-ear cress), this protein is Histone-lysine N-methyltransferase, H3 lysine-9 specific SUVH6 (SUVH6).